The sequence spans 506 residues: Acetylcholine receptor subunit gamma (506 aa).

An N-terminal signal peptide occupies residues 1 to 17 (MVLTLLLIICLALEVRS). The Extracellular portion of the chain corresponds to 18-235 (ENEEGRLIEK…IIFFLIIQRK (218 aa)). An N-linked (GlcNAc...) asparagine glycan is attached at Asn85. The cysteines at positions 145 and 159 are disulfide-linked. Helical transmembrane passes span 236-260 (PLFY…VYFL), 269-287 (CTLS…FLIA), and 303-324 (YLIF…VLNV). Topologically, residues 325–466 (SLRTPNTHSL…WVLIGKVIDK (142 aa)) are cytoplasmic. The residue at position 381 (Tyr381) is a Phosphotyrosine; by Tyr-kinases. A helical transmembrane segment spans residues 467-490 (ACFWIALLLFSIGTLAIFLTGHFN).

The protein belongs to the ligand-gated ion channel (TC 1.A.9) family. Acetylcholine receptor (TC 1.A.9.1) subfamily. Gamma/CHRNG sub-subfamily. In terms of assembly, pentamer of two alpha chains, and one each of the beta, delta, and gamma chains. Seems not to be glycosylated on Asn-158.

The protein resides in the postsynaptic cell membrane. It localises to the cell membrane. The catalysed reaction is K(+)(in) = K(+)(out). It carries out the reaction Na(+)(in) = Na(+)(out). Functionally, after binding acetylcholine, the AChR responds by an extensive change in conformation that affects all subunits and leads to opening of an ion-conducting channel across the plasma membrane. The polypeptide is Acetylcholine receptor subunit gamma (CHRNG) (Tetronarce californica (Pacific electric ray)).